Consider the following 165-residue polypeptide: 6,7-dimethyl-8-ribityllumazine synthase (165 aa).

5-amino-6-(D-ribitylamino)uracil-binding positions include F24, 62 to 64 (AFE), and 86 to 88 (AVI). (2S)-2-hydroxy-3-oxobutyl phosphate is bound at residue 91–92 (DT). Residue H94 is the Proton donor of the active site. F119 contacts 5-amino-6-(D-ribitylamino)uracil. R133 serves as a coordination point for (2S)-2-hydroxy-3-oxobutyl phosphate.

This sequence belongs to the DMRL synthase family.

It catalyses the reaction (2S)-2-hydroxy-3-oxobutyl phosphate + 5-amino-6-(D-ribitylamino)uracil = 6,7-dimethyl-8-(1-D-ribityl)lumazine + phosphate + 2 H2O + H(+). The protein operates within cofactor biosynthesis; riboflavin biosynthesis; riboflavin from 2-hydroxy-3-oxobutyl phosphate and 5-amino-6-(D-ribitylamino)uracil: step 1/2. Catalyzes the formation of 6,7-dimethyl-8-ribityllumazine by condensation of 5-amino-6-(D-ribitylamino)uracil with 3,4-dihydroxy-2-butanone 4-phosphate. This is the penultimate step in the biosynthesis of riboflavin. In Prochlorococcus marinus (strain MIT 9303), this protein is 6,7-dimethyl-8-ribityllumazine synthase.